The sequence spans 166 residues: Interferon gamma (166 aa).

Residues 1 to 23 (MKYTSYFLALLLCVLLGFSGSYG) form the signal peptide. Glutamine 24 carries the post-translational modification Pyrrolidone carboxylic acid. Asparagine 39 and asparagine 106 each carry an N-linked (GlcNAc...) asparagine glycan.

Belongs to the type II (or gamma) interferon family. As to quaternary structure, homodimer. Interacts with IFNGR1 (via extracellular domain); this interaction promotes IFNGR1 dimerization. In terms of tissue distribution, released primarily from activated T lymphocytes.

It is found in the secreted. Its function is as follows. Type II interferon produced by immune cells such as T-cells and NK cells that plays crucial roles in antimicrobial, antiviral, and antitumor responses by activating effector immune cells and enhancing antigen presentation. Primarily signals through the JAK-STAT pathway after interaction with its receptor IFNGR1 to affect gene regulation. Upon IFNG binding, IFNGR1 intracellular domain opens out to allow association of downstream signaling components JAK2, JAK1 and STAT1, leading to STAT1 activation, nuclear translocation and transcription of IFNG-regulated genes. Many of the induced genes are transcription factors such as IRF1 that are able to further drive regulation of a next wave of transcription. Plays a role in class I antigen presentation pathway by inducing a replacement of catalytic proteasome subunits with immunoproteasome subunits. In turn, increases the quantity, quality, and repertoire of peptides for class I MHC loading. Increases the efficiency of peptide generation also by inducing the expression of activator PA28 that associates with the proteasome and alters its proteolytic cleavage preference. Up-regulates as well MHC II complexes on the cell surface by promoting expression of several key molecules such as cathepsins B/CTSB, H/CTSH, and L/CTSL. Participates in the regulation of hematopoietic stem cells during development and under homeostatic conditions by affecting their development, quiescence, and differentiation. The sequence is that of Interferon gamma (IFNG) from Bubalus carabanensis (Swamp type water buffalo).